Consider the following 586-residue polypeptide: Aspartate--tRNA ligase (586 aa).

Glutamate 171 contacts L-aspartate. Residues 195–198 (QLFK) form an aspartate region. An L-aspartate-binding site is contributed by arginine 217. Residues 217 to 219 (RDE) and glutamine 226 contribute to the ATP site. Histidine 448 is an L-aspartate binding site. Residue glutamate 482 participates in ATP binding. Residue arginine 489 participates in L-aspartate binding. 534 to 537 (GLDR) serves as a coordination point for ATP.

This sequence belongs to the class-II aminoacyl-tRNA synthetase family. Type 1 subfamily. Homodimer.

Its subcellular location is the cytoplasm. The catalysed reaction is tRNA(Asp) + L-aspartate + ATP = L-aspartyl-tRNA(Asp) + AMP + diphosphate. Functionally, catalyzes the attachment of L-aspartate to tRNA(Asp) in a two-step reaction: L-aspartate is first activated by ATP to form Asp-AMP and then transferred to the acceptor end of tRNA(Asp). The chain is Aspartate--tRNA ligase from Buchnera aphidicola subsp. Acyrthosiphon pisum (strain APS) (Acyrthosiphon pisum symbiotic bacterium).